Here is a 339-residue protein sequence, read N- to C-terminus: 1-aminocyclopropane-1-carboxylate deaminase (339 aa).

Residue lysine 52 is modified to N6-(pyridoxal phosphate)lysine. The active-site Nucleophile is the serine 79.

Belongs to the ACC deaminase/D-cysteine desulfhydrase family. In terms of assembly, homotrimer. Requires pyridoxal 5'-phosphate as cofactor.

The catalysed reaction is 1-aminocyclopropane-1-carboxylate + H2O = 2-oxobutanoate + NH4(+). Its function is as follows. Catalyzes a cyclopropane ring-opening reaction, the irreversible conversion of 1-aminocyclopropane-1-carboxylate (ACC) to ammonia and alpha-ketobutyrate. Allows growth on ACC as a nitrogen source. This chain is 1-aminocyclopropane-1-carboxylate deaminase, found in Bradyrhizobium sp. (strain BTAi1 / ATCC BAA-1182).